We begin with the raw amino-acid sequence, 415 residues long: Phosphopentomutase (415 aa).

Positions 10, 313, 318, 354, 355, and 366 each coordinate Mn(2+).

This sequence belongs to the phosphopentomutase family. The cofactor is Mn(2+).

It localises to the cytoplasm. It carries out the reaction 2-deoxy-alpha-D-ribose 1-phosphate = 2-deoxy-D-ribose 5-phosphate. The catalysed reaction is alpha-D-ribose 1-phosphate = D-ribose 5-phosphate. Its pathway is carbohydrate degradation; 2-deoxy-D-ribose 1-phosphate degradation; D-glyceraldehyde 3-phosphate and acetaldehyde from 2-deoxy-alpha-D-ribose 1-phosphate: step 1/2. Isomerase that catalyzes the conversion of deoxy-ribose 1-phosphate (dRib-1-P) and ribose 1-phosphate (Rib-1-P) to deoxy-ribose 5-phosphate (dRib-5-P) and ribose 5-phosphate (Rib-5-P), respectively. This is Phosphopentomutase from Psychromonas ingrahamii (strain DSM 17664 / CCUG 51855 / 37).